Reading from the N-terminus, the 768-residue chain is Envelope glycoprotein gp160 (768 aa).

An N-terminal signal peptide occupies residues 1-16 (MTKFLGIFIVLGIGIG). Over 17–701 (IGISTKQQWI…SWFDFSKWLN (685 aa)) the chain is Extracellular. Asn-37 carries N-linked (GlcNAc...) asparagine; by host glycosylation. Cysteines 44 and 57 form a disulfide. 7 N-linked (GlcNAc...) asparagine; by host glycosylation sites follow: Asn-70, Asn-141, Asn-151, Asn-166, Asn-181, Asn-200, and Asn-211. 5 disulfides stabilise this stretch: Cys-103/Cys-219, Cys-110/Cys-210, Cys-115/Cys-167, Cys-232/Cys-262, and Cys-242/Cys-254. Residues 115–166 (CVELKGSATSTPATSTTAGTKLPCVRNKTDSNLQSCNDTIIEKEMNDEAASN) are V1. Residues 167–210 (CTFAMAGYIRDQKKNYSVVWNDAEIFCKRSTSHNGTKECYMIHC) form a V2 region. Residues Asn-256, Asn-267, Asn-277, Asn-283, Asn-295, Asn-307, Asn-317, Asn-374, Asn-415, Asn-490, and Asn-493 are each glycosylated (N-linked (GlcNAc...) asparagine; by host). The tract at residues 312 to 344 (CKRPGNKTVLPVTIMAGLVFHSQKYNTRLRQAW) is V3. A disulfide bridge links Cys-312 with Cys-345. Disulfide bonds link Cys-397–Cys-473 and Cys-404–Cys-446. Residues 404 to 446 (CKMDWFLNYLNNLTVDADHNHCKNNAGKGRSPGPCVQRTYVAC) form a V4 region. Positions 489–496 (QNRTNVTL) are V5. The interval 539–559 (VPFVLGFLGFLGAAGTAMGAA) is fusion peptide. An immunosuppression region spans residues 602–618 (LNARVTALEKYLADQAR). Residues Asn-646 and Asn-662 are each glycosylated (N-linked (GlcNAc...) asparagine; by host). A coiled-coil region spans residues 650–687 (LEWEKQIEGLEGNITKQLEQAREQEEKNLDAYQKLSDW). An MPER; binding to GalCer region spans residues 683–704 (KLSDWSSFWSWFDFSKWLNILK). A helical membrane pass occupies residues 702–722 (ILKIGFLAVIGVIGLRLLYTL). Residues 723-768 (YTCIARVRQGYSPLSPQIHIHPWKGQPDNAGEPEEGGRTGKSKSTH) are Cytoplasmic-facing. The YXXL motif; contains endocytosis signal motif lies at 733–736 (YSPL). The tract at residues 744-768 (PWKGQPDNAGEPEEGGRTGKSKSTH) is disordered.

The mature envelope protein (Env) consists of a homotrimer of non-covalently associated gp120-gp41 heterodimers. The resulting complex protrudes from the virus surface as a spike. Interacts with host CD4 and CCR5. Gp120 also interacts with the C-type lectins CD209/DC-SIGN and CLEC4M/DC-SIGNR (collectively referred to as DC-SIGN(R)). In terms of assembly, the mature envelope protein (Env) consists of a homotrimer of non-covalently associated gp120-gp41 heterodimers. The resulting complex protrudes from the virus surface as a spike. Post-translationally, specific enzymatic cleavages in vivo yield mature proteins. Envelope glycoproteins are synthesized as an inactive precursor that is heavily N-glycosylated and processed likely by host cell furin in the Golgi to yield the mature SU and TM proteins. The cleavage site between SU and TM requires the minimal sequence [KR]-X-[KR]-R.

The protein localises to the virion membrane. It is found in the host cell membrane. Its subcellular location is the host endosome membrane. Functionally, the surface protein gp120 (SU) attaches the virus to the host lymphoid cell by binding to the primary receptor CD4. This interaction induces a structural rearrangement creating a high affinity binding site for a chemokine coreceptor like CCR5. This peculiar 2 stage receptor-interaction strategy allows gp120 to maintain the highly conserved coreceptor-binding site in a cryptic conformation, protected from neutralizing antibodies. These changes are transmitted to the transmembrane protein gp41 and are thought to activate its fusogenic potential by unmasking its fusion peptide. Surface protein gp120 (SU) may target the virus to gut-associated lymphoid tissue (GALT) by binding host ITGA4/ITGB7 (alpha-4/beta-7 integrins), a complex that mediates T-cell migration to the GALT. Interaction between gp120 and ITGA4/ITGB7 would allow the virus to enter GALT early in the infection, infecting and killing most of GALT's resting CD4+ T-cells. This T-cell depletion is believed to be the major insult to the host immune system leading to AIDS. In terms of biological role, the surface protein gp120 is a ligand for CD209/DC-SIGN and CLEC4M/DC-SIGNR, which are respectively found on dendritic cells (DCs), and on endothelial cells of liver sinusoids and lymph node sinuses. These interactions allow capture of viral particles at mucosal surfaces by these cells and subsequent transmission to permissive cells. DCs are professional antigen presenting cells, critical for host immunity by inducing specific immune responses against a broad variety of pathogens. They act as sentinels in various tissues where they take up antigen, process it, and present it to T-cells following migration to lymphoid organs. SIV subverts the migration properties of dendritic cells to gain access to CD4+ T-cells in lymph nodes. Virus transmission to permissive T-cells occurs either in trans (without DCs infection, through viral capture and transmission), or in cis (following DCs productive infection, through the usual CD4-gp120 interaction), thereby inducing a robust infection. In trans infection, bound virions remain infectious over days and it is proposed that they are not degraded, but protected in non-lysosomal acidic organelles within the DCs close to the cell membrane thus contributing to the viral infectious potential during DCs' migration from the periphery to the lymphoid tissues. On arrival at lymphoid tissues, intact virions recycle back to DCs' cell surface allowing virus transmission to CD4+ T-cells. Virion capture also seems to lead to MHC-II-restricted viral antigen presentation, and probably to the activation of SIV-specific CD4+ cells. Its function is as follows. The transmembrane protein gp41 (TM) acts as a class I viral fusion protein. Under the current model, the protein has at least 3 conformational states: pre-fusion native state, pre-hairpin intermediate state, and post-fusion hairpin state. During fusion of viral and target intracellular membranes, the coiled coil regions (heptad repeats) assume a trimer-of-hairpins structure, positioning the fusion peptide in close proximity to the C-terminal region of the ectodomain. The formation of this structure appears to drive apposition and subsequent fusion of viral and target cell membranes. Complete fusion occurs in host cell endosomes. The virus undergoes clathrin-dependent internalization long before endosomal fusion, thus minimizing the surface exposure of conserved viral epitopes during fusion and reducing the efficacy of inhibitors targeting these epitopes. Membranes fusion leads to delivery of the nucleocapsid into the cytoplasm. Functionally, the envelope glycoprotein gp160 precursor down-modulates cell surface CD4 antigen by interacting with it in the endoplasmic reticulum and blocking its transport to the cell surface. The gp120-gp41 heterodimer allows rapid transcytosis of the virus through CD4 negative cells such as simple epithelial monolayers of the intestinal, rectal and endocervical epithelial barriers. Both gp120 and gp41 specifically recognize glycosphingolipids galactosyl-ceramide (GalCer) or 3' sulfo-galactosyl-ceramide (GalS) present in the lipid rafts structures of epithelial cells. Binding to these alternative receptors allows the rapid transcytosis of the virus through the epithelial cells. This transcytotic vesicle-mediated transport of virions from the apical side to the basolateral side of the epithelial cells does not involve infection of the cells themselves. The polypeptide is Envelope glycoprotein gp160 (env) (Simian immunodeficiency virus agm.vervet (isolate AGM155) (SIV-agm.ver)).